Reading from the N-terminus, the 292-residue chain is WRKY transcription factor 55 (292 aa).

Residues 133–155 (VERSGASGSSTPRQRRRKDEGEE) form a disordered region. A DNA-binding region (WRKY) is located at residues 167-235 (NTDLPPDDNH…YRGSHTCYNS (69 aa)).

It belongs to the WRKY group III family.

It localises to the nucleus. Transcription factor. Interacts specifically with the W box (5'-(T)TGAC[CT]-3'), a frequently occurring elicitor-responsive cis-acting element. The chain is WRKY transcription factor 55 (WRKY55) from Arabidopsis thaliana (Mouse-ear cress).